The primary structure comprises 201 residues: 3-isopropylmalate dehydratase small subunit (201 aa).

The protein belongs to the LeuD family. LeuD type 1 subfamily. Heterodimer of LeuC and LeuD.

The enzyme catalyses (2R,3S)-3-isopropylmalate = (2S)-2-isopropylmalate. The protein operates within amino-acid biosynthesis; L-leucine biosynthesis; L-leucine from 3-methyl-2-oxobutanoate: step 2/4. In terms of biological role, catalyzes the isomerization between 2-isopropylmalate and 3-isopropylmalate, via the formation of 2-isopropylmaleate. This Shigella boydii serotype 18 (strain CDC 3083-94 / BS512) protein is 3-isopropylmalate dehydratase small subunit.